The following is a 199-amino-acid chain: Peroxiredoxin-1 (199 aa).

Residue Ser-2 is modified to N-acetylserine. The 160-residue stretch at 6–165 (AKIGYPAPNF…IIRLVQAFQF (160 aa)) folds into the Thioredoxin domain. Residue Lys-7 is modified to N6-acetyllysine; alternate. A Glycyl lysine isopeptide (Lys-Gly) (interchain with G-Cter in SUMO2); alternate cross-link involves residue Lys-7. N6-acetyllysine is present on residues Lys-16 and Lys-27. Ser-32 bears the Phosphoserine mark. Residue Lys-35 is modified to N6-acetyllysine; alternate. The residue at position 35 (Lys-35) is an N6-succinyllysine; alternate. Residue Cys-52 is the Cysteine sulfenic acid (-SOH) intermediate of the active site. Thr-90 carries the phosphothreonine modification. Residue Lys-120 forms a Glycyl lysine isopeptide (Lys-Gly) (interchain with G-Cter in SUMO2) linkage. At Lys-136 the chain carries N6-acetyllysine. Lys-185 participates in a covalent cross-link: Glycyl lysine isopeptide (Lys-Gly) (interchain with G-Cter in SUMO1). Lys-197 carries the N6-acetyllysine modification.

The protein belongs to the peroxiredoxin family. AhpC/Prx1 subfamily. In terms of assembly, homodimer; disulfide-linked, upon oxidation. 5 homodimers assemble to form a ring-like decamer. Interacts with GDPD5; forms a mixed-disulfide with GDPD5. Interacts with SESN1 and SESN2. Interacts with FAM107A. Post-translationally, phosphorylated on Thr-90 during the M-phase, which leads to a decrease in enzymatic activity. In terms of processing, acetylation increases reducing activity and resistance to superoxidation. Deacetylated by HDAC6 which decreases reducing activity. In terms of tissue distribution, found in various tissues; high concentration in liver.

It is found in the cytoplasm. The catalysed reaction is a hydroperoxide + [thioredoxin]-dithiol = an alcohol + [thioredoxin]-disulfide + H2O. In terms of biological role, thiol-specific peroxidase that catalyzes the reduction of hydrogen peroxide and organic hydroperoxides to water and alcohols, respectively. Plays a role in cell protection against oxidative stress by detoxifying peroxides and as sensor of hydrogen peroxide-mediated signaling events. Might participate in the signaling cascades of growth factors and tumor necrosis factor-alpha by regulating the intracellular concentrations of H(2)O(2). Reduces an intramolecular disulfide bond in GDPD5 that gates the ability to GDPD5 to drive postmitotic motor neuron differentiation. The sequence is that of Peroxiredoxin-1 (Prdx1) from Mus musculus (Mouse).